Consider the following 750-residue polypeptide: Retron Eco8 OLD nuclease (750 aa).

The ATPase domain N-terminus stretch occupies residues 1–173 (MTIESIRVKN…IDLYDWNPIW (173 aa)). 33–37 (NVGKS) contacts ATP. The segment at 174 to 260 (KLISNLNSFN…TQSDGTNSNK (87 aa)) is dimerization domain. Positions 261 to 390 (FLETLLHLLI…FSDNEARLFF (130 aa)) are ATPase domain C-terminus. The segment at 391–704 (SEYIVFVEGA…SGWVTTFLNY (314 aa)) is toprim domain. A divalent metal cation-binding residues include E398, E402, D450, D452, S623, and E641.

It belongs to the class 1 OLD nuclease family. In terms of assembly, homodimer. The cofactor is a divalent metal cation.

Probable nuclease member of antiviral defense system retron Eco8, composed of an reverse transcriptase (RT), this nuclease and a non-coding RNA (ncRNA) encoded between them. Expression of retron Eco8 confers protection against bacteriophages T4, T6, T7 and SECphi4, SECphi6 and SECphi18. At multiplicity of infection (MOI) of 0.02 cultures slow growth when infected with SECphi4 but do not collapse, at MOI 2 cultures collapse. When the retron is cloned in another E.coli strain synthesizes msDNA (a branched RNA linked by a 2',5'-phosphodiester bond to a single-stranded DNA). The retron transcript serves as primer and template to the reaction, and codes for the RT. In Escherichia coli, this protein is Retron Eco8 OLD nuclease.